A 306-amino-acid chain; its full sequence is Pantothenate kinase (306 aa).

91–98 (GSVAVGKS) contacts ATP.

It belongs to the prokaryotic pantothenate kinase family.

The protein localises to the cytoplasm. It carries out the reaction (R)-pantothenate + ATP = (R)-4'-phosphopantothenate + ADP + H(+). Its pathway is cofactor biosynthesis; coenzyme A biosynthesis; CoA from (R)-pantothenate: step 1/5. This Streptococcus agalactiae serotype Ia (strain ATCC 27591 / A909 / CDC SS700) protein is Pantothenate kinase.